The chain runs to 140 residues: Large ribosomal subunit protein bL17 (140 aa).

It belongs to the bacterial ribosomal protein bL17 family. Part of the 50S ribosomal subunit. Contacts protein L32.

The sequence is that of Large ribosomal subunit protein bL17 from Rhizobium rhizogenes (strain K84 / ATCC BAA-868) (Agrobacterium radiobacter).